Here is a 200-residue protein sequence, read N- to C-terminus: Trem-like transcript 4 protein (200 aa).

The N-terminal stretch at 1–25 (MAWGGVHTCCFHLCCCCSWPQGAVP) is a signal peptide. Residues 26–126 (EELHKHPGQT…NIITVLRNIS (101 aa)) form the Ig-like V-type domain. An intrachain disulfide couples Cys40 to Cys109. Residue Asn93 is glycosylated (N-linked (GlcNAc...) asparagine).

The protein resides in the secreted. In terms of biological role, positively regulates Toll-like receptor TLR7 signaling in macrophages. The sequence is that of Trem-like transcript 4 protein (TREML4) from Homo sapiens (Human).